Reading from the N-terminus, the 470-residue chain is MTVQTFTPNQTTTLETAKKTIAEQSQNSQTTGNKIGFVSLGCPKNLVDSERILTQLRTEGYEIVNSYHDSDVVIVNTCGFIDSAVQESLDTIGEALKENGKVIVTGCLGAREDEIRQVHPNVLGITGPHAYQNVLEHVHQYAPKPAHNPFTSLVPDHGVKLTPKHYAYLKISEGCNHRCTFCIIPSMRGDLVSRPVGEIIGEAERLKNAGVKELLVISQDTSAYGVDTKHSLGFANGSPVRHNIKALSEELGKMGIWVRLHYVYPYPHVDEIIPLMAEGKVLPYLDIPFQHASPRVLKMMKRPGQAERTLERIKKWREICPELVIRSTFIVGFPGETEEDFQILLDWLKEAQLDRVGCFKYSPVEGAAANEIEDQIPEDVKQDRFERFMLVQQEISAAKLQKRIGSTMQVLIDEVDDEGAIGRTYADAPEIDGLVYLNGETNLKPGELVNVVIEHADEYDLWGSVLHDAQ.

One can recognise an MTTase N-terminal domain in the interval 33 to 143 (NKIGFVSLGC…VLEHVHQYAP (111 aa)). [4Fe-4S] cluster contacts are provided by Cys42, Cys78, Cys107, Cys175, Cys179, and Cys182. One can recognise a Radical SAM core domain in the interval 161-398 (LTPKHYAYLK…MLVQQEISAA (238 aa)). The region spanning 401 to 467 (QKRIGSTMQV…EYDLWGSVLH (67 aa)) is the TRAM domain.

The protein belongs to the methylthiotransferase family. RimO subfamily. Requires [4Fe-4S] cluster as cofactor.

It localises to the cytoplasm. The catalysed reaction is L-aspartate(89)-[ribosomal protein uS12]-hydrogen + (sulfur carrier)-SH + AH2 + 2 S-adenosyl-L-methionine = 3-methylsulfanyl-L-aspartate(89)-[ribosomal protein uS12]-hydrogen + (sulfur carrier)-H + 5'-deoxyadenosine + L-methionine + A + S-adenosyl-L-homocysteine + 2 H(+). Catalyzes the methylthiolation of an aspartic acid residue of ribosomal protein uS12. This Vibrio cholerae serotype O1 (strain ATCC 39541 / Classical Ogawa 395 / O395) protein is Ribosomal protein uS12 methylthiotransferase RimO.